A 402-amino-acid chain; its full sequence is Baeyer-Villiger oxidase notM (402 aa).

Belongs to the questin oxidase family.

In terms of biological role, baeyer-Villiger oxidase; part of the gene cluster that mediates the biosynthesis of notoamide, a fungal indole alkaloid that belongs to a family of natural products containing a characteristic bicyclo[2.2.2]diazaoctane core. The first step of notoamide biosynthesis involves coupling of L-proline and L-tryptophan by the bimodular NRPS notE, to produce cyclo-L-tryptophan-L-proline called brevianamide F. The reverse prenyltransferase notF then acts as a deoxybrevianamide E synthase and converts brevianamide F to deoxybrevianamide E via reverse prenylation at C-2 of the indole ring leading to the bicyclo[2.2.2]diazaoctane core. Deoxybrevianamide E is further hydroxylated at C-6 of the indole ring, likely catalyzed by the cytochrome P450 monooxygenase notG, to yield 6-hydroxy-deoxybrevianamide E. 6-hydroxy-deoxybrevianamide E is a specific substrate of the prenyltransferase notC for normal prenylation at C-7 to produce 6-hydroxy-7-prenyl-deoxybrevianamide, also called notoamide S. As the proposed pivotal branching point in notoamide biosynthesis, notoamide S can be diverted to notoamide E through an oxidative pyran ring closure putatively catalyzed by either notH cytochrome P450 monooxygenase or the notD FAD-linked oxidoreductase. This step would be followed by an indole 2,3-epoxidation-initiated pinacol-like rearrangement catalyzed by the notB FAD-dependent monooxygenase leading to the formation of notoamide C and notoamide D. On the other hand notoamide S is converted to notoamide T by notH (or notD), a bifunctional oxidase that also functions as the intramolecular Diels-Alderase responsible for generation of (+)-notoamide T. To generate antipodal (-)-notoaminide T, notH' (or notD') in Aspergillus versicolor is expected to catalyze a Diels-Alder reaction leading to the opposite stereochemistry. The remaining oxidoreductase notD (or notH) likely catalyzes the oxidative pyran ring formation to yield (+)-stephacidin A. The FAD-dependent monooxygenase notI is highly similar to notB and is predicted to catalyze a similar conversion from (+)-stephacidin A to (-)-notoamide B via the 2,3-epoxidation of (+)-stephacidin A followed by a pinacol-type rearrangement. Finally, it remains unclear which enzyme could be responsible for the final hydroxylation steps leading to notoamide A and sclerotiamide. The function of notM in the notoamide biosynthesis has not been determined yet. The protein is Baeyer-Villiger oxidase notM of Aspergillus sp. (strain MF297-2).